A 423-amino-acid chain; its full sequence is Putative competence-damage inducible protein (423 aa).

It belongs to the CinA family.

This chain is Putative competence-damage inducible protein, found in Streptococcus pyogenes serotype M49 (strain NZ131).